The chain runs to 122 residues: MGLFSRRAIGNQYESLAKEYLQRQGLRFIEANFTTKVGEIDLIFKEAQTIVFVEVKYRKNSCYGDAAEMVNPAKANKLIKTAYLWLNKHGYNACNTAMRFDVVAIHSNGHDINWIANAITQG.

This sequence belongs to the UPF0102 family.

This is UPF0102 protein VV1_0590 from Vibrio vulnificus (strain CMCP6).